The chain runs to 138 residues: Small ribosomal subunit protein uS11c (138 aa).

Residues 1 to 23 form a disordered region; sequence MAKPILRIGSRKNTRSGSRKNVR. Residues 9–23 are compositionally biased toward basic residues; sequence GSRKNTRSGSRKNVR.

It belongs to the universal ribosomal protein uS11 family. In terms of assembly, part of the 30S ribosomal subunit.

Its subcellular location is the plastid. It localises to the chloroplast. This is Small ribosomal subunit protein uS11c from Aethionema grandiflorum (Persian stone-cress).